A 148-amino-acid polypeptide reads, in one-letter code: Large ribosomal subunit protein bL9 (148 aa).

This sequence belongs to the bacterial ribosomal protein bL9 family.

In terms of biological role, binds to the 23S rRNA. In Thermobifida fusca (strain YX), this protein is Large ribosomal subunit protein bL9.